A 53-amino-acid chain; its full sequence is Large ribosomal subunit protein bL33 (53 aa).

It belongs to the bacterial ribosomal protein bL33 family.

The chain is Large ribosomal subunit protein bL33 from Ureaplasma parvum serovar 3 (strain ATCC 27815 / 27 / NCTC 11736).